The chain runs to 292 residues: Protease HtpX (292 aa).

2 helical membrane-spanning segments follow: residues 5-25 and 34-54; these read IFLF…VMSV and SGLL…SLLL. A Zn(2+)-binding site is contributed by His140. Glu141 is an active-site residue. His144 lines the Zn(2+) pocket. 2 helical membrane passes run 155 to 175 and 193 to 213; these read LLQG…GGII and IIVF…AMWF. A Zn(2+)-binding site is contributed by Glu218.

It belongs to the peptidase M48B family. The cofactor is Zn(2+).

It localises to the cell inner membrane. This is Protease HtpX from Xanthomonas oryzae pv. oryzae (strain PXO99A).